A 160-amino-acid polypeptide reads, in one-letter code: Respiratory supercomplex factor 1, mitochondrial (160 aa).

Residues 5-96 (PSSFDSKEAS…SSLKEKKSEE (92 aa)) enclose the HIG1 domain. 2 helical membrane-spanning segments follow: residues 33–49 (LVPL…ALAA) and 67–89 (RVGL…GSSL). Residues 88-160 (SLKEKKSEEE…DLESHIKNEK (73 aa)) are a coiled coil.

It belongs to the RCF1 family. As to quaternary structure, associates with the respiratory chain complex III/complex IV supercomplex.

Its subcellular location is the mitochondrion membrane. In terms of biological role, cytochrome c oxidase subunit which plays a role in assembly of respiratory supercomplexes. The chain is Respiratory supercomplex factor 1, mitochondrial (RCF1) from Zygosaccharomyces rouxii (strain ATCC 2623 / CBS 732 / NBRC 1130 / NCYC 568 / NRRL Y-229).